Reading from the N-terminus, the 77-residue chain is TSC22 domain family protein 3 (77 aa).

Met1 bears the N-acetylmethionine mark. Positions 19–40 are leucine-zipper; it reads LKEQIRELVEKNSQLERENTLL. The segment at 41 to 77 is disordered; sequence KTLASPEQLEKFQSRLSPEEPAPETPEAPEAPGGSAV. Ser45 is subject to Phosphoserine. The span at 68–77 shows a compositional bias: low complexity; that stretch reads APEAPGGSAV.

The protein belongs to the TSC-22/Dip/Bun family. Can form homodimers, however it is likely to function as a monomer. Interacts with AP1 and NFKB1. Interacts with MYOD1. Interacts with HDAC1; this interaction affects HDAC1 activity on MYOG promoter and thus inhibits MYOD1 transcriptional activity.

It localises to the cytoplasm. Its subcellular location is the nucleus. Protects T-cells from IL2 deprivation-induced apoptosis through the inhibition of FOXO3A transcriptional activity that leads to the down-regulation of the pro-apoptotic factor BCL2L11. In macrophages, plays a role in the anti-inflammatory and immunosuppressive effects of glucocorticoids and IL10. In T-cells, inhibits anti-CD3-induced NFKB1 nuclear translocation. In vitro, suppresses AP1 and NFKB1 DNA-binding activities. Inhibits myogenic differentiation and mediates anti-myogenic effects of glucocorticoids by binding and regulating MYOD1 and HDAC1 transcriptional activity resulting in reduced expression of MYOG. The polypeptide is TSC22 domain family protein 3 (TSC22D3) (Sus scrofa (Pig)).